The sequence spans 97 residues: Small ribosomal subunit protein bS6 (97 aa).

The protein belongs to the bacterial ribosomal protein bS6 family.

Binds together with bS18 to 16S ribosomal RNA. This chain is Small ribosomal subunit protein bS6, found in Limosilactobacillus fermentum (strain NBRC 3956 / LMG 18251) (Lactobacillus fermentum).